The sequence spans 24 residues: Xenoposin-precursor fragment B1 (24 aa).

As to expression, expressed by the skin glands.

The protein localises to the secreted. In terms of biological role, has antibacterial activity. This Xenopus borealis (Kenyan clawed frog) protein is Xenoposin-precursor fragment B1.